We begin with the raw amino-acid sequence, 158 residues long: Transcription elongation factor GreA (158 aa).

Positions E47–A75 form a coiled coil.

The protein belongs to the GreA/GreB family.

In terms of biological role, necessary for efficient RNA polymerase transcription elongation past template-encoded arresting sites. The arresting sites in DNA have the property of trapping a certain fraction of elongating RNA polymerases that pass through, resulting in locked ternary complexes. Cleavage of the nascent transcript by cleavage factors such as GreA or GreB allows the resumption of elongation from the new 3'terminus. GreA releases sequences of 2 to 3 nucleotides. In Oceanobacillus iheyensis (strain DSM 14371 / CIP 107618 / JCM 11309 / KCTC 3954 / HTE831), this protein is Transcription elongation factor GreA.